A 259-amino-acid polypeptide reads, in one-letter code: Zinc import ATP-binding protein ZnuC (259 aa).

An ABC transporter domain is found at 6–223 (VTVQSVSVTL…PAYHELFGPG (218 aa)). Position 38-45 (38-45 (GPNGAGKS)) interacts with ATP. A disordered region spans residues 230-259 (ALYTHDHDHDHDLHGNATHSHDHNGPCNHD). Over residues 233–259 (THDHDHDHDLHGNATHSHDHNGPCNHD) the composition is skewed to basic and acidic residues.

Belongs to the ABC transporter superfamily. Zinc importer (TC 3.A.1.15.5) family. The complex is composed of two ATP-binding proteins (ZnuC), two transmembrane proteins (ZnuB) and a solute-binding protein (ZnuA).

It is found in the cell inner membrane. The catalysed reaction is Zn(2+)(out) + ATP(in) + H2O(in) = Zn(2+)(in) + ADP(in) + phosphate(in) + H(+)(in). Its function is as follows. Part of the ABC transporter complex ZnuABC involved in zinc import. Responsible for energy coupling to the transport system. The chain is Zinc import ATP-binding protein ZnuC from Alcanivorax borkumensis (strain ATCC 700651 / DSM 11573 / NCIMB 13689 / SK2).